Reading from the N-terminus, the 176-residue chain is MIHAILKMGDPRLLRVAAPVERYDTPELRALIDDMFETMAHAQGVGLAAPQIGVDLQLVIFGFERNDRYPDAPAVPRTILCNPVIEPLSGEMEDGWEGCLSVPGLRGLVPRYRHIRYSGYDPAGQRIEREAEGFHARVVQHECDHLIGRLYPTRIRDLTKFGYTEVLFPEMDPNAD.

Residues C99 and H141 each contribute to the Fe cation site. The active site involves E142. H145 provides a ligand contact to Fe cation.

Belongs to the polypeptide deformylase family. The cofactor is Fe(2+).

The catalysed reaction is N-terminal N-formyl-L-methionyl-[peptide] + H2O = N-terminal L-methionyl-[peptide] + formate. Its function is as follows. Removes the formyl group from the N-terminal Met of newly synthesized proteins. Requires at least a dipeptide for an efficient rate of reaction. N-terminal L-methionine is a prerequisite for activity but the enzyme has broad specificity at other positions. This chain is Peptide deformylase 2, found in Bordetella bronchiseptica (strain ATCC BAA-588 / NCTC 13252 / RB50) (Alcaligenes bronchisepticus).